Reading from the N-terminus, the 123-residue chain is Large ribosomal subunit protein bL12 (123 aa).

It belongs to the bacterial ribosomal protein bL12 family. In terms of assembly, homodimer. Part of the ribosomal stalk of the 50S ribosomal subunit. Forms a multimeric L10(L12)X complex, where L10 forms an elongated spine to which 2 to 4 L12 dimers bind in a sequential fashion. Binds GTP-bound translation factors.

In terms of biological role, forms part of the ribosomal stalk which helps the ribosome interact with GTP-bound translation factors. Is thus essential for accurate translation. The polypeptide is Large ribosomal subunit protein bL12 (Photorhabdus laumondii subsp. laumondii (strain DSM 15139 / CIP 105565 / TT01) (Photorhabdus luminescens subsp. laumondii)).